A 175-amino-acid polypeptide reads, in one-letter code: Inorganic pyrophosphatase 1 (175 aa).

Substrate-binding residues include K30, R44, and Y56. 3 residues coordinate Mg(2+): D66, D71, and D103. Y142 contacts substrate.

The protein belongs to the PPase family. Homohexamer. Mg(2+) is required as a cofactor.

Its subcellular location is the cytoplasm. It carries out the reaction diphosphate + H2O = 2 phosphate + H(+). In terms of biological role, catalyzes the hydrolysis of inorganic pyrophosphate (PPi) forming two phosphate ions. The protein is Inorganic pyrophosphatase 1 of Pseudomonas syringae pv. tomato (strain ATCC BAA-871 / DC3000).